The following is a 114-amino-acid chain: Large ribosomal subunit protein bL19 (114 aa).

This sequence belongs to the bacterial ribosomal protein bL19 family.

This protein is located at the 30S-50S ribosomal subunit interface and may play a role in the structure and function of the aminoacyl-tRNA binding site. This Bacillus mycoides (strain KBAB4) (Bacillus weihenstephanensis) protein is Large ribosomal subunit protein bL19.